A 298-amino-acid chain; its full sequence is MKQKTIGKAVEIVGIGLHKGVPVHLVLEPLPENSGLVFFRRDLGVSIPLEPKNVIDTTMATVIGKEGAKISTIEHLLSAIYAYGIDNLKISLDNEEAPIMDGSSIGFCMLLDEAGIVSQNAPKRAIKIKSPIEVKDGEKFVRVEPSEVSLFDFSIEFDHPAIREQSYRFTFSTKAYKEEIARARTFGFVHEVQYLRSKGLALGGSLANAIVLDETGILNKEGLRYKEEFVRHKILDAIGDMALLGIPLIGTYVSYAGSHKLNHLLTKELLKEEESYEIVSLEDEAEAIEIEKVYATGE.

His-75, His-232, and Asp-236 together coordinate Zn(2+). The Proton donor role is filled by His-259.

The protein belongs to the LpxC family. The cofactor is Zn(2+).

It catalyses the reaction a UDP-3-O-[(3R)-3-hydroxyacyl]-N-acetyl-alpha-D-glucosamine + H2O = a UDP-3-O-[(3R)-3-hydroxyacyl]-alpha-D-glucosamine + acetate. The protein operates within glycolipid biosynthesis; lipid IV(A) biosynthesis; lipid IV(A) from (3R)-3-hydroxytetradecanoyl-[acyl-carrier-protein] and UDP-N-acetyl-alpha-D-glucosamine: step 2/6. Its function is as follows. Catalyzes the hydrolysis of UDP-3-O-myristoyl-N-acetylglucosamine to form UDP-3-O-myristoylglucosamine and acetate, the committed step in lipid A biosynthesis. The sequence is that of UDP-3-O-acyl-N-acetylglucosamine deacetylase from Wolinella succinogenes (strain ATCC 29543 / DSM 1740 / CCUG 13145 / JCM 31913 / LMG 7466 / NCTC 11488 / FDC 602W) (Vibrio succinogenes).